The chain runs to 65 residues: Metallothionein (65 aa).

Belongs to the metallothionein superfamily. Type 4 family.

In terms of biological role, metallothioneins have a high content of cysteine residues that bind various heavy metals. The polypeptide is Metallothionein (Paracentrotus lividus (Common sea urchin)).